Here is a 475-residue protein sequence, read N- to C-terminus: Ribulose bisphosphate carboxylase large chain (475 aa).

Positions 1–2 are excised as a propeptide; that stretch reads MS. The residue at position 3 (Pro-3) is an N-acetylproline. Lys-14 bears the N6,N6,N6-trimethyllysine mark. Asn-123 and Thr-173 together coordinate substrate. The Proton acceptor role is filled by Lys-175. Lys-177 is a binding site for substrate. Positions 201, 203, and 204 each coordinate Mg(2+). Lys-201 bears the N6-carboxylysine mark. The active-site Proton acceptor is His-294. The substrate site is built by Arg-295, His-327, and Ser-379.

This sequence belongs to the RuBisCO large chain family. Type I subfamily. Heterohexadecamer of 8 large chains and 8 small chains; disulfide-linked. The disulfide link is formed within the large subunit homodimers. Mg(2+) is required as a cofactor. The disulfide bond which can form in the large chain dimeric partners within the hexadecamer appears to be associated with oxidative stress and protein turnover.

The protein resides in the plastid. It localises to the chloroplast. The catalysed reaction is 2 (2R)-3-phosphoglycerate + 2 H(+) = D-ribulose 1,5-bisphosphate + CO2 + H2O. It catalyses the reaction D-ribulose 1,5-bisphosphate + O2 = 2-phosphoglycolate + (2R)-3-phosphoglycerate + 2 H(+). Functionally, ruBisCO catalyzes two reactions: the carboxylation of D-ribulose 1,5-bisphosphate, the primary event in carbon dioxide fixation, as well as the oxidative fragmentation of the pentose substrate in the photorespiration process. Both reactions occur simultaneously and in competition at the same active site. The chain is Ribulose bisphosphate carboxylase large chain from Platanus occidentalis (Sycamore).